Here is a 482-residue protein sequence, read N- to C-terminus: Alanine aminotransferase 2 (482 aa).

Lys-299 carries the post-translational modification N6-(pyridoxal phosphate)lysine.

It belongs to the class-I pyridoxal-phosphate-dependent aminotransferase family. Alanine aminotransferase subfamily. As to quaternary structure, homodimer. The cofactor is pyridoxal 5'-phosphate. The N-terminus is blocked. In terms of tissue distribution, mesophyll and bundle sheath cells.

It catalyses the reaction L-alanine + 2-oxoglutarate = pyruvate + L-glutamate. Its pathway is photosynthesis; C4 acid pathway. The protein operates within amino-acid degradation; L-alanine degradation via transaminase pathway; pyruvate from L-alanine: step 1/1. Its function is as follows. Transfer of C3 units between the cytosol of mesophyll and bundle sheath cells to maintain a nitrogen-carbon balance in the C4-dicarboxylic pathway. The protein is Alanine aminotransferase 2 of Panicum miliaceum (Proso millet).